Reading from the N-terminus, the 233-residue chain is Large ribosomal subunit protein uL1 (233 aa).

The protein belongs to the universal ribosomal protein uL1 family. In terms of assembly, part of the 50S ribosomal subunit.

Binds directly to 23S rRNA. The L1 stalk is quite mobile in the ribosome, and is involved in E site tRNA release. Its function is as follows. Protein L1 is also a translational repressor protein, it controls the translation of the L11 operon by binding to its mRNA. The protein is Large ribosomal subunit protein uL1 of Shewanella loihica (strain ATCC BAA-1088 / PV-4).